The chain runs to 157 residues: 2-C-methyl-D-erythritol 2,4-cyclodiphosphate synthase (157 aa).

Positions 8 and 10 each coordinate a divalent metal cation. 4-CDP-2-C-methyl-D-erythritol 2-phosphate contacts are provided by residues 8-10 (DVH) and 34-35 (HS). Residue H42 participates in a divalent metal cation binding. 4-CDP-2-C-methyl-D-erythritol 2-phosphate contacts are provided by residues 56-58 (DIG), 61-65 (FPDTD), 100-106 (AQKPKMA), 132-135 (TTEE), and F139.

It belongs to the IspF family. Homotrimer. A divalent metal cation is required as a cofactor.

The enzyme catalyses 4-CDP-2-C-methyl-D-erythritol 2-phosphate = 2-C-methyl-D-erythritol 2,4-cyclic diphosphate + CMP. It participates in isoprenoid biosynthesis; isopentenyl diphosphate biosynthesis via DXP pathway; isopentenyl diphosphate from 1-deoxy-D-xylulose 5-phosphate: step 4/6. Functionally, involved in the biosynthesis of isopentenyl diphosphate (IPP) and dimethylallyl diphosphate (DMAPP), two major building blocks of isoprenoid compounds. Catalyzes the conversion of 4-diphosphocytidyl-2-C-methyl-D-erythritol 2-phosphate (CDP-ME2P) to 2-C-methyl-D-erythritol 2,4-cyclodiphosphate (ME-CPP) with a corresponding release of cytidine 5-monophosphate (CMP). The sequence is that of 2-C-methyl-D-erythritol 2,4-cyclodiphosphate synthase from Clostridium novyi (strain NT).